The sequence spans 300 residues: Acetylglutamate kinase (300 aa).

Substrate contacts are provided by residues 73 to 74, R95, and N197; that span reads GG.

It belongs to the acetylglutamate kinase family. ArgB subfamily.

The protein resides in the cytoplasm. It carries out the reaction N-acetyl-L-glutamate + ATP = N-acetyl-L-glutamyl 5-phosphate + ADP. The protein operates within amino-acid biosynthesis; L-arginine biosynthesis; N(2)-acetyl-L-ornithine from L-glutamate: step 2/4. Its function is as follows. Catalyzes the ATP-dependent phosphorylation of N-acetyl-L-glutamate. This Polynucleobacter necessarius subsp. necessarius (strain STIR1) protein is Acetylglutamate kinase.